Here is a 184-residue protein sequence, read N- to C-terminus: Putative tetraheme cytochrome-c type (184 aa).

Residues 1 to 14 (MSKHAASSAKRFSL) are Cytoplasmic-facing. The helical transmembrane segment at 15–35 (LALGLMFVGGIVFVWAVDFGI) threads the bilayer. At 36 to 184 (KTTNTLEFCT…HEPTEPDDAS (149 aa)) the chain is on the periplasmic side. The heme site is built by Cys44, Cys47, Met50, Cys73, Cys76, and His77. Substrate is bound by residues Lys89 and Asp95. Heme is bound by residues Asp95, Cys133, Cys136, His137, Cys165, Cys168, His169, and His174.

Belongs to the NapC/NirT/NrfH family. In terms of processing, binds 4 heme groups per subunit.

Its subcellular location is the cell inner membrane. The protein is Putative tetraheme cytochrome-c type of Allochromatium vinosum (strain ATCC 17899 / DSM 180 / NBRC 103801 / NCIMB 10441 / D) (Chromatium vinosum).